The following is a 216-amino-acid chain: Pyrophosphatase PpaX (216 aa).

Asp9 functions as the Nucleophile in the catalytic mechanism.

It belongs to the HAD-like hydrolase superfamily. PpaX family. The cofactor is Mg(2+).

It carries out the reaction diphosphate + H2O = 2 phosphate + H(+). Hydrolyzes pyrophosphate formed during P-Ser-HPr dephosphorylation by HPrK/P. Might play a role in controlling the intracellular pyrophosphate pool. The polypeptide is Pyrophosphatase PpaX (Bacillus cereus (strain ATCC 10987 / NRS 248)).